Reading from the N-terminus, the 320-residue chain is o-succinylbenzoate synthase (320 aa).

K133 (proton donor) is an active-site residue. Residues D161, E190, and D213 each contribute to the Mg(2+) site. The Proton acceptor role is filled by K235.

Belongs to the mandelate racemase/muconate lactonizing enzyme family. MenC type 1 subfamily. The cofactor is a divalent metal cation.

It carries out the reaction (1R,6R)-6-hydroxy-2-succinyl-cyclohexa-2,4-diene-1-carboxylate = 2-succinylbenzoate + H2O. Its pathway is quinol/quinone metabolism; 1,4-dihydroxy-2-naphthoate biosynthesis; 1,4-dihydroxy-2-naphthoate from chorismate: step 4/7. It functions in the pathway quinol/quinone metabolism; menaquinone biosynthesis. Functionally, converts 2-succinyl-6-hydroxy-2,4-cyclohexadiene-1-carboxylate (SHCHC) to 2-succinylbenzoate (OSB). The polypeptide is o-succinylbenzoate synthase (Escherichia fergusonii (strain ATCC 35469 / DSM 13698 / CCUG 18766 / IAM 14443 / JCM 21226 / LMG 7866 / NBRC 102419 / NCTC 12128 / CDC 0568-73)).